The following is a 259-amino-acid chain: 3-deoxy-manno-octulosonate cytidylyltransferase (259 aa).

This sequence belongs to the KdsB family.

It localises to the cytoplasm. It catalyses the reaction 3-deoxy-alpha-D-manno-oct-2-ulosonate + CTP = CMP-3-deoxy-beta-D-manno-octulosonate + diphosphate. Its pathway is nucleotide-sugar biosynthesis; CMP-3-deoxy-D-manno-octulosonate biosynthesis; CMP-3-deoxy-D-manno-octulosonate from 3-deoxy-D-manno-octulosonate and CTP: step 1/1. The protein operates within bacterial outer membrane biogenesis; lipopolysaccharide biosynthesis. Functionally, activates KDO (a required 8-carbon sugar) for incorporation into bacterial lipopolysaccharide in Gram-negative bacteria. This is 3-deoxy-manno-octulosonate cytidylyltransferase from Protochlamydia amoebophila (strain UWE25).